An 86-amino-acid chain; its full sequence is Small ribosomal subunit protein bS16 (86 aa).

This sequence belongs to the bacterial ribosomal protein bS16 family.

This Stenotrophomonas maltophilia (strain R551-3) protein is Small ribosomal subunit protein bS16.